The sequence spans 487 residues: Adenylosuccinate synthetase, chloroplastic (487 aa).

Residues 1–46 (MSLSTVNHAAAAAAAAGSGKSFSAAAPAAPSVRLPRTRAPAAAAVS) constitute a chloroplast transit peptide. Residues 74-80 (GDEGKGK) and 102-104 (GHT) each bind GTP. The Proton acceptor role is filled by aspartate 75. Aspartate 75 and glycine 102 together coordinate Mg(2+). IMP contacts are provided by residues 75–78 (DEGK), 100–103 (NAGH), threonine 192, arginine 206, glutamine 286, threonine 301, and arginine 365. The active-site Proton donor is the histidine 103. 361-367 (TTTGRPR) lines the substrate pocket. GTP-binding positions include arginine 367, 393–395 (KLD), and 476–478 (GVG).

This sequence belongs to the adenylosuccinate synthetase family. As to quaternary structure, homodimer. The cofactor is Mg(2+).

The protein localises to the plastid. It localises to the chloroplast. It carries out the reaction IMP + L-aspartate + GTP = N(6)-(1,2-dicarboxyethyl)-AMP + GDP + phosphate + 2 H(+). Its pathway is purine metabolism; AMP biosynthesis via de novo pathway; AMP from IMP: step 1/2. Its function is as follows. Plays an important role in the de novo pathway and in the salvage pathway of purine nucleotide biosynthesis. Catalyzes the first committed step in the biosynthesis of AMP from IMP. This is Adenylosuccinate synthetase, chloroplastic from Oryza sativa subsp. indica (Rice).